The chain runs to 479 residues: Bifunctional aspartate aminotransferase and glutamate/aspartate-prephenate aminotransferase (479 aa).

The transit peptide at 1–79 directs the protein to the chloroplast; that stretch reads MAATTTTSSS…VEVDISLSPR (79 aa). L-aspartate is bound at residue glycine 111. 172–173 lines the pyridoxal 5'-phosphate pocket; it reads AK. The L-aspartate site is built by tryptophan 197 and asparagine 247. Pyridoxal 5'-phosphate is bound by residues asparagine 247, tyrosine 279, and 307 to 309; that span reads GFS. Lysine 310 bears the N6-(pyridoxal phosphate)lysine mark. Arginine 318 is a pyridoxal 5'-phosphate binding site. Residue arginine 449 coordinates L-aspartate.

This sequence belongs to the class-I pyridoxal-phosphate-dependent aminotransferase family. As to quaternary structure, homodimer. The cofactor is pyridoxal 5'-phosphate. As to expression, expressed in flowers, pistils, stamens, ovaries and at lower levels in leaves and sepals.

It localises to the plastid. The protein localises to the chloroplast. It carries out the reaction L-aspartate + 2-oxoglutarate = oxaloacetate + L-glutamate. The catalysed reaction is L-arogenate + oxaloacetate = prephenate + L-aspartate. It catalyses the reaction L-arogenate + 2-oxoglutarate = prephenate + L-glutamate. The protein operates within amino-acid biosynthesis; L-phenylalanine biosynthesis; L-arogenate from prephenate (L-Asp route): step 1/1. Its pathway is amino-acid biosynthesis; L-phenylalanine biosynthesis; L-arogenate from prephenate (L-Glu route): step 1/1. In terms of biological role, prokaryotic-type aspartate aminotransferase. Also has a prenate transaminase activity. Involved in the aromatic amino acids biosynthesis pathway via the arogenate route. Required for the transamination of prephenate into arogenate. Can use 2-oxoglutarate, oxaloacetate and prephenate as substrates, but not phenylpyruvate or 4-hydroxyphenylpyruvate. The sequence is that of Bifunctional aspartate aminotransferase and glutamate/aspartate-prephenate aminotransferase from Petunia hybrida (Petunia).